The chain runs to 454 residues: Transcription factor bHLH123 (454 aa).

The segment covering 101 to 113 has biased composition (low complexity); that stretch reads SNANANTTSSTSS. Disordered regions lie at residues 101–127, 185–228, 270–348, and 398–417; these read SNAN…HHQA, ATTT…QFGS, AAAG…KRKE, and GASL…VSEE. 2 stretches are compositionally biased toward polar residues: residues 185–195 and 207–228; these read ATTTTPNSSSG and SSDQ…QFGS. The span at 303–324 shows a compositional bias: basic and acidic residues; sequence EQPKNISEIRDSSSNEVKRGGN. Positions 334 to 383 constitute a bHLH domain; sequence KSEAASPSPAFKRKEKMGDRIAALQQLVSPFGKTDAASVLSEAIEYIKFL.

Homodimer.

The protein localises to the nucleus. The protein is Transcription factor bHLH123 (BHLH123) of Arabidopsis thaliana (Mouse-ear cress).